Here is a 163-residue protein sequence, read N- to C-terminus: Aspartate carbamoyltransferase regulatory chain (163 aa).

Zn(2+) contacts are provided by C113, C118, C143, and C146.

The protein belongs to the PyrI family. As to quaternary structure, contains catalytic and regulatory chains. Zn(2+) serves as cofactor.

In terms of biological role, involved in allosteric regulation of aspartate carbamoyltransferase. The polypeptide is Aspartate carbamoyltransferase regulatory chain (Caldivirga maquilingensis (strain ATCC 700844 / DSM 13496 / JCM 10307 / IC-167)).